A 234-amino-acid polypeptide reads, in one-letter code: tRNA (guanine-N(1)-)-methyltransferase (234 aa).

S-adenosyl-L-methionine contacts are provided by residues Gly-110 and 134–139 (IGDYVL).

This sequence belongs to the RNA methyltransferase TrmD family. As to quaternary structure, homodimer.

It localises to the cytoplasm. The enzyme catalyses guanosine(37) in tRNA + S-adenosyl-L-methionine = N(1)-methylguanosine(37) in tRNA + S-adenosyl-L-homocysteine + H(+). In terms of biological role, specifically methylates guanosine-37 in various tRNAs. In Tropheryma whipplei (strain Twist) (Whipple's bacillus), this protein is tRNA (guanine-N(1)-)-methyltransferase.